Here is a 123-residue protein sequence, read N- to C-terminus: MAWTPLLLLLLSHCTGSLSQPVLTQPTSLSASPGASARFTCTLRSGINVGTYRIYWYQQKPGSLPRYLLRYKSDSDKQQGSGVPSRFSGSKDASTNAGLLLISGLQSEDEADYYCAIWYSSTS.

Residues 1–19 (MAWTPLLLLLLSHCTGSLS) form the signal peptide. The tract at residues 20 to 44 (QPVLTQPTSLSASPGASARFTCTLR) is framework-1. The region spanning 21–123 (PVLTQPTSLS…YCAIWYSSTS (103 aa)) is the Ig-like domain. A disulfide bridge links cysteine 41 with cysteine 115. The segment at 45-53 (SGINVGTYR) is complementarity-determining-1. The segment at 54–70 (IYWYQQKPGSLPRYLLR) is framework-2. Positions 71–77 (YKSDSDK) are complementarity-determining-2. The interval 78 to 115 (QQGSGVPSRFSGSKDASTNAGLLLISGLQSEDEADYYC) is framework-3. The complementarity-determining-3 stretch occupies residues 116–123 (AIWYSSTS).

As to quaternary structure, immunoglobulins are composed of two identical heavy chains and two identical light chains; disulfide-linked.

It is found in the secreted. It localises to the cell membrane. V region of the variable domain of immunoglobulin light chains that participates in the antigen recognition. Immunoglobulins, also known as antibodies, are membrane-bound or secreted glycoproteins produced by B lymphocytes. In the recognition phase of humoral immunity, the membrane-bound immunoglobulins serve as receptors which, upon binding of a specific antigen, trigger the clonal expansion and differentiation of B lymphocytes into immunoglobulins-secreting plasma cells. Secreted immunoglobulins mediate the effector phase of humoral immunity, which results in the elimination of bound antigens. The antigen binding site is formed by the variable domain of one heavy chain, together with that of its associated light chain. Thus, each immunoglobulin has two antigen binding sites with remarkable affinity for a particular antigen. The variable domains are assembled by a process called V-(D)-J rearrangement and can then be subjected to somatic hypermutations which, after exposure to antigen and selection, allow affinity maturation for a particular antigen. The protein is Immunoglobulin lambda variable 5-39 of Homo sapiens (Human).